The following is a 700-amino-acid chain: UvrABC system protein C (700 aa).

The 80-residue stretch at 11–90 (TTPGVYLYKD…IKKHRPRYNI (80 aa)) folds into the GIY-YIG domain. The UVR domain occupies 200 to 235 (TELIDMLRADMQAASDALEFEEAALLRDQLQAVERT).

The protein belongs to the UvrC family. Interacts with UvrB in an incision complex.

The protein resides in the cytoplasm. The UvrABC repair system catalyzes the recognition and processing of DNA lesions. UvrC both incises the 5' and 3' sides of the lesion. The N-terminal half is responsible for the 3' incision and the C-terminal half is responsible for the 5' incision. In Oleidesulfovibrio alaskensis (strain ATCC BAA-1058 / DSM 17464 / G20) (Desulfovibrio alaskensis), this protein is UvrABC system protein C.